Consider the following 260-residue polypeptide: MLTILKLGGSILSDKNVPYSIKWDNLERIAMEIKNALDYYKNQNKEIKLILVHGGGAFGHPVAKKYLKIEDGKKIFINMEKGFWEIQRAMRRFNNIIIDTLQSYDIPAVSIQPSSFVVFGDKLIFDTSAIKEMLKRNLVPVIHGDIVIDDKNGYRIISGDDIVPYLANELKADLILYATDVDGVLIDNKPIKRIDKNNIYKILNYLSGSNSIDVTGGMKYKIDMIRKNKCRGFVFNGNKANNIYKALLGEVEGTEIDFSE.

ATP is bound at residue 6-10 (KLGGS). Substrate is bound at residue glycine 55. Residue glycine 56 participates in ATP binding. Residues histidine 60 and glycine 159 each contribute to the substrate site. ATP contacts are provided by aspartate 180, glycine 217, and lysine 221.

This sequence belongs to the isopentenyl phosphate kinase family. Homodimer.

The enzyme catalyses isopentenyl phosphate + ATP = isopentenyl diphosphate + ADP. In terms of biological role, catalyzes the formation of isopentenyl diphosphate (IPP), the building block of all isoprenoids. Has no activity with farnesyl phosphate. This chain is Isopentenyl phosphate kinase, found in Methanocaldococcus jannaschii (strain ATCC 43067 / DSM 2661 / JAL-1 / JCM 10045 / NBRC 100440) (Methanococcus jannaschii).